The primary structure comprises 231 residues: Staphylococcal superantigen-like 7 (231 aa).

Residues 1–30 form the signal peptide; it reads MKLKTLAKATLALGLLTTGVITSEGQAVQA.

Belongs to the staphylococcal/streptococcal toxin family. In terms of assembly, interacts with host IgA and complement C5; these interactions inhibits complement activation.

Its subcellular location is the secreted. Its function is as follows. Plays a role in the inhibition of host complement-mediated lysis and serum bactericidal activity by interacting with complement component C5. Affects all three pathways of complement activation and inhibits the cleavage of C5 by preventing its binding to C5 convertases. In turn, prevents C5a-mediated neutrophil migration. The sequence is that of Staphylococcal superantigen-like 7 from Staphylococcus aureus (strain NCTC 8325 / PS 47).